The primary structure comprises 287 residues: Pyridoxal 5'-phosphate synthase subunit PdxS (287 aa).

Residue Asp-21 participates in D-ribose 5-phosphate binding. The active-site Schiff-base intermediate with D-ribose 5-phosphate is the Lys-78. Gly-150 provides a ligand contact to D-ribose 5-phosphate. Residue Arg-162 coordinates D-glyceraldehyde 3-phosphate. Residues Gly-211 and 232-233 (GS) contribute to the D-ribose 5-phosphate site.

The protein belongs to the PdxS/SNZ family. As to quaternary structure, in the presence of PdxT, forms a dodecamer of heterodimers.

It carries out the reaction aldehydo-D-ribose 5-phosphate + D-glyceraldehyde 3-phosphate + L-glutamine = pyridoxal 5'-phosphate + L-glutamate + phosphate + 3 H2O + H(+). The protein operates within cofactor biosynthesis; pyridoxal 5'-phosphate biosynthesis. Functionally, catalyzes the formation of pyridoxal 5'-phosphate from ribose 5-phosphate (RBP), glyceraldehyde 3-phosphate (G3P) and ammonia. The ammonia is provided by the PdxT subunit. Can also use ribulose 5-phosphate and dihydroxyacetone phosphate as substrates, resulting from enzyme-catalyzed isomerization of RBP and G3P, respectively. This is Pyridoxal 5'-phosphate synthase subunit PdxS from Tropheryma whipplei (strain TW08/27) (Whipple's bacillus).